Consider the following 286-residue polypeptide: 4-hydroxybenzoate octaprenyltransferase (286 aa).

The next 9 helical transmembrane spans lie at 22–42 (IGTL…SAGV), 45–65 (FSLL…GCVI), 90–110 (LTAV…FVLV), 113–133 (LNQF…IYPF), 142–162 (QVVL…AVVG), 169–189 (WLLF…YAMV), 212–232 (LYIA…GWLE), 236–256 (VSYY…QWLI), and 265–285 (FRAF…IMLA).

The protein belongs to the UbiA prenyltransferase family. Mg(2+) is required as a cofactor.

Its subcellular location is the cell inner membrane. It catalyses the reaction all-trans-octaprenyl diphosphate + 4-hydroxybenzoate = 4-hydroxy-3-(all-trans-octaprenyl)benzoate + diphosphate. It functions in the pathway cofactor biosynthesis; ubiquinone biosynthesis. In terms of biological role, catalyzes the prenylation of para-hydroxybenzoate (PHB) with an all-trans polyprenyl group. Mediates the second step in the final reaction sequence of ubiquinone-8 (UQ-8) biosynthesis, which is the condensation of the polyisoprenoid side chain with PHB, generating the first membrane-bound Q intermediate 3-octaprenyl-4-hydroxybenzoate. The polypeptide is 4-hydroxybenzoate octaprenyltransferase (Tolumonas auensis (strain DSM 9187 / NBRC 110442 / TA 4)).